The sequence spans 275 residues: Large ribosomal subunit protein uL2c (275 aa).

Residues 219–255 (TVRGSVMNPCDHPHGGGEGRAPIGRTRPLTPWGKPAL) form a disordered region.

This sequence belongs to the universal ribosomal protein uL2 family. In terms of assembly, part of the 50S ribosomal subunit.

It localises to the plastid. Its subcellular location is the chloroplast. The protein is Large ribosomal subunit protein uL2c (rpl2) of Trieres chinensis (Marine centric diatom).